A 619-amino-acid polypeptide reads, in one-letter code: E3 ubiquitin-protein ligase complex SLX5-SLX8 subunit SLX5 (619 aa).

Residues 1 to 23 form a disordered region; the sequence is MHSDTNGRTKSNNSPSDNNPNET. The segment covering 11–21 has biased composition (low complexity); sequence SNNSPSDNNPN. Phosphoserine occurs at positions 14 and 29. The disordered stretch occupies residues 63 to 90; the sequence is VRSDSRSRNSQRTHITASSERPDFQANN. The span at 70–90 shows a compositional bias: polar residues; that stretch reads RNSQRTHITASSERPDFQANN. Residues 201 to 335 are EUC1 interaction domain; the sequence is SRRQLLRRSA…ALFTEFRNQL (135 aa).

In terms of assembly, component of the heterodimeric SUMO-targeted ubiquitin ligase (STUbL) complex composed of SLX5 and SLX8. Interacts with sirtuin SIR2. Interacts with KAR9. Interacts with EUC1.

It localises to the nucleus. The protein localises to the chromosome. It is found in the centromere. The protein resides in the kinetochore. The enzyme catalyses S-ubiquitinyl-[E2 ubiquitin-conjugating enzyme]-L-cysteine + [acceptor protein]-L-lysine = [E2 ubiquitin-conjugating enzyme]-L-cysteine + N(6)-ubiquitinyl-[acceptor protein]-L-lysine.. It participates in protein modification; protein ubiquitination. Its function is as follows. Component of the SUMO-targeted ubiquitin ligase (STUbL) complex SLX5/SLX8 that mediates ubiquitination and subsequent desumoylation of sumoylated proteins and proteins containing SUMO-like domains for their degradation. The STUbL complex SLX5/SLX8 stimulates ubiquitin conjugating enzymes, including UBC1, UBC4, UBC5 and UBC13-MMS2, and mediates the proteolytic down-regulation of sumoylated proteins. The STUbL complex SLX5/SLX8 is involved in ubiquitin-mediated degradation of histone variant CSE4, preventing mislocalization to euchromatin. The complex plays an essential role in maintenance of chromosome stability and links SUMO-dependent ubiquitination to a centromere-specific function during mitosis. The complex is involved in proteolysis of spindle positioning protein KAR9 and ensures correct spindle function by regulating levels of microtubule-associated proteins. During replication, the complex helps prevent DNA lesions via recombination and has a role in localizing the DNA damage protein DCD2. The complex especially ubiquitinates the nuclease YEN1 and prevents persistent accumulation of a fraction of YEN1 associated with sites of activity in late G2/M and helps maintain the balance between pro- and anti-crossover pathways during homologous recombination. It is also involved in ubiquitin-mediated degradation of DNA repair proteins RAD52 and RAD57. Along with SIR2, promotes silencing of genes at telomeric or ribosomal DNA (rDNA) loci. Finally, the complex is recruited to distinct genomic hotspots of non-H2B protein ubiquitination (ub-hotspots) by the sumoylated transcription factor-like protein EUC1 where it ubiquitinates EUC1 and presumably other targets. The polypeptide is E3 ubiquitin-protein ligase complex SLX5-SLX8 subunit SLX5 (SLX5) (Saccharomyces cerevisiae (strain ATCC 204508 / S288c) (Baker's yeast)).